Reading from the N-terminus, the 1004-residue chain is uncharacterized protein (1004 aa).

N27 carries N-linked (GlcNAc...) asparagine glycosylation. Transmembrane regions (helical) follow at residues F38–I58, I77–I97, L188–Y208, and F324–S344. 3 N-linked (GlcNAc...) asparagine glycosylation sites follow: N392, N418, and N421. 2 helical membrane passes run M422–F442 and M599–M619. N627 carries N-linked (GlcNAc...) asparagine glycosylation. 2 helical membrane passes run G726–F746 and G823–S843. The N-linked (GlcNAc...) asparagine glycan is linked to N859.

To yeast YPR031w.

It localises to the membrane. This is an uncharacterized protein from Schizosaccharomyces pombe (strain 972 / ATCC 24843) (Fission yeast).